The chain runs to 163 residues: Large ribosomal subunit protein uL15 (163 aa).

Positions 1–43 (MKLNEIADNEGSRKKRTRVGRGIGSGKGKQSGRGGKGQTARSG) are disordered. The segment covering 21-37 (RGIGSGKGKQSGRGGKG) has biased composition (gly residues).

This sequence belongs to the universal ribosomal protein uL15 family. Part of the 50S ribosomal subunit.

Functionally, binds to the 23S rRNA. The polypeptide is Large ribosomal subunit protein uL15 (Afipia carboxidovorans (strain ATCC 49405 / DSM 1227 / KCTC 32145 / OM5) (Oligotropha carboxidovorans)).